The chain runs to 530 residues: Chondroitin sulfate N-acetylgalactosaminyltransferase 1 (530 aa).

Residues 1 to 12 (MVRRGLLGWISR) lie on the Cytoplasmic side of the membrane. The helical; Signal-anchor for type II membrane protein transmembrane segment at 13-33 (VVILLVLLCCAISVLYMLACT) threads the bilayer. Residues 34–530 (PKGDQEQLGL…QKQKASSKKT (497 aa)) lie on the Lumenal side of the membrane. A coiled-coil region spans residues 57 to 93 (AVLQEREEQHRNYVNSLKRQIAQLKDELQARSEQFRS). Positions 88–107 (SEQFRSGQDQASDATSLRSG) are disordered. A compositionally biased stretch (polar residues) spans 91–105 (FRSGQDQASDATSLR). N-linked (GlcNAc...) asparagine glycans are attached at residues Asn-313 and Asn-322. 2 residues coordinate a divalent metal cation: Asp-358 and His-475.

It belongs to the chondroitin N-acetylgalactosaminyltransferase family.

It is found in the golgi apparatus. The protein resides in the golgi stack membrane. It catalyses the reaction 3-O-(beta-D-GlcA-(1-&gt;3)-beta-D-Gal-(1-&gt;3)-beta-D-Gal-(1-&gt;4)-beta-D-Xyl)-L-seryl-[protein] + UDP-N-acetyl-alpha-D-galactosamine = 3-O-(beta-D-GalNAc-(1-&gt;4)-beta-D-GlcA-(1-&gt;3)-beta-D-Gal-(1-&gt;3)-beta-D-Gal-(1-&gt;4)-beta-D-Xyl)-L-seryl-[protein] + UDP + H(+). Its function is as follows. Transfers 1,4-N-acetylgalactosamine (GalNAc) from UDP-GalNAc to the non-reducing end of glucuronic acid (GlcUA). Required for addition of the first GalNAc to the core tetrasaccharide linker and for elongation of chondroitin chains. Important role in chondroitin chain biosynthesis in cartilage formation, and subsequent endochondral ossification. Moreover, is involved in the metabolism of aggrecan. This chain is Chondroitin sulfate N-acetylgalactosaminyltransferase 1, found in Mus musculus (Mouse).